The sequence spans 635 residues: Threonine--tRNA ligase (635 aa).

In terms of domain architecture, TGS spans 1-61; that stretch reads MTVVRLPDGT…ETDSDLVLIT (61 aa). Positions 242–533 are catalytic; that stretch reads DHRKLGKQLD…LIEHHAGALP (292 aa). Positions 333, 384, and 510 each coordinate Zn(2+).

It belongs to the class-II aminoacyl-tRNA synthetase family. Homodimer. Zn(2+) serves as cofactor.

Its subcellular location is the cytoplasm. It carries out the reaction tRNA(Thr) + L-threonine + ATP = L-threonyl-tRNA(Thr) + AMP + diphosphate + H(+). Catalyzes the attachment of threonine to tRNA(Thr) in a two-step reaction: L-threonine is first activated by ATP to form Thr-AMP and then transferred to the acceptor end of tRNA(Thr). Also edits incorrectly charged L-seryl-tRNA(Thr). The protein is Threonine--tRNA ligase of Nitrosomonas europaea (strain ATCC 19718 / CIP 103999 / KCTC 2705 / NBRC 14298).